Reading from the N-terminus, the 288-residue chain is Phosphatidylserine decarboxylase proenzyme (288 aa).

Active-site charge relay system; for autoendoproteolytic cleavage activity residues include Asp101, His158, and Ser262. Ser262 functions as the Schiff-base intermediate with substrate; via pyruvic acid; for decarboxylase activity in the catalytic mechanism. A Pyruvic acid (Ser); by autocatalysis modification is found at Ser262.

Belongs to the phosphatidylserine decarboxylase family. PSD-B subfamily. Prokaryotic type I sub-subfamily. As to quaternary structure, heterodimer of a large membrane-associated beta subunit and a small pyruvoyl-containing alpha subunit. Requires pyruvate as cofactor. Is synthesized initially as an inactive proenzyme. Formation of the active enzyme involves a self-maturation process in which the active site pyruvoyl group is generated from an internal serine residue via an autocatalytic post-translational modification. Two non-identical subunits are generated from the proenzyme in this reaction, and the pyruvate is formed at the N-terminus of the alpha chain, which is derived from the carboxyl end of the proenzyme. The autoendoproteolytic cleavage occurs by a canonical serine protease mechanism, in which the side chain hydroxyl group of the serine supplies its oxygen atom to form the C-terminus of the beta chain, while the remainder of the serine residue undergoes an oxidative deamination to produce ammonia and the pyruvoyl prosthetic group on the alpha chain. During this reaction, the Ser that is part of the protease active site of the proenzyme becomes the pyruvoyl prosthetic group, which constitutes an essential element of the active site of the mature decarboxylase.

The protein resides in the cell membrane. The catalysed reaction is a 1,2-diacyl-sn-glycero-3-phospho-L-serine + H(+) = a 1,2-diacyl-sn-glycero-3-phosphoethanolamine + CO2. It functions in the pathway phospholipid metabolism; phosphatidylethanolamine biosynthesis; phosphatidylethanolamine from CDP-diacylglycerol: step 2/2. Its function is as follows. Catalyzes the formation of phosphatidylethanolamine (PtdEtn) from phosphatidylserine (PtdSer). This Alkalilimnicola ehrlichii (strain ATCC BAA-1101 / DSM 17681 / MLHE-1) protein is Phosphatidylserine decarboxylase proenzyme.